Here is a 341-residue protein sequence, read N- to C-terminus: tRNA N6-adenosine threonylcarbamoyltransferase (341 aa).

Fe cation contacts are provided by H114 and H118. Substrate-binding positions include 136 to 140, D170, G183, D187, and N275; that span reads LVSGG. D303 lines the Fe cation pocket.

Belongs to the KAE1 / TsaD family. Fe(2+) is required as a cofactor.

Its subcellular location is the cytoplasm. It carries out the reaction L-threonylcarbamoyladenylate + adenosine(37) in tRNA = N(6)-L-threonylcarbamoyladenosine(37) in tRNA + AMP + H(+). In terms of biological role, required for the formation of a threonylcarbamoyl group on adenosine at position 37 (t(6)A37) in tRNAs that read codons beginning with adenine. Is involved in the transfer of the threonylcarbamoyl moiety of threonylcarbamoyl-AMP (TC-AMP) to the N6 group of A37, together with TsaE and TsaB. TsaD likely plays a direct catalytic role in this reaction. The protein is tRNA N6-adenosine threonylcarbamoyltransferase of Mycobacterium avium (strain 104).